The sequence spans 191 residues: Pyridoxal 5'-phosphate synthase subunit PdxT (191 aa).

Glycine 46–serine 48 is an L-glutamine binding site. Cysteine 75 functions as the Nucleophile in the catalytic mechanism. L-glutamine contacts are provided by residues arginine 101 and isoleucine 129–arginine 130. Catalysis depends on charge relay system residues histidine 165 and glutamate 167.

This sequence belongs to the glutaminase PdxT/SNO family. As to quaternary structure, in the presence of PdxS, forms a dodecamer of heterodimers. Only shows activity in the heterodimer.

The enzyme catalyses aldehydo-D-ribose 5-phosphate + D-glyceraldehyde 3-phosphate + L-glutamine = pyridoxal 5'-phosphate + L-glutamate + phosphate + 3 H2O + H(+). It carries out the reaction L-glutamine + H2O = L-glutamate + NH4(+). It participates in cofactor biosynthesis; pyridoxal 5'-phosphate biosynthesis. Its function is as follows. Catalyzes the hydrolysis of glutamine to glutamate and ammonia as part of the biosynthesis of pyridoxal 5'-phosphate. The resulting ammonia molecule is channeled to the active site of PdxS. This is Pyridoxal 5'-phosphate synthase subunit PdxT from Staphylococcus saprophyticus subsp. saprophyticus (strain ATCC 15305 / DSM 20229 / NCIMB 8711 / NCTC 7292 / S-41).